The following is a 276-amino-acid chain: NAD kinase (276 aa).

The Proton acceptor role is filled by Asp61. Residues 61–62 (DG), Arg66, 135–136 (NE), Arg146, His163, Asp165, and Ala200 contribute to the NAD(+) site.

The protein belongs to the NAD kinase family. It depends on a divalent metal cation as a cofactor.

The protein resides in the cytoplasm. It catalyses the reaction NAD(+) + ATP = ADP + NADP(+) + H(+). Involved in the regulation of the intracellular balance of NAD and NADP, and is a key enzyme in the biosynthesis of NADP. Catalyzes specifically the phosphorylation on 2'-hydroxyl of the adenosine moiety of NAD to yield NADP. The protein is NAD kinase of Chloroflexus aggregans (strain MD-66 / DSM 9485).